A 157-amino-acid chain; its full sequence is Biotin carboxyl carrier protein of acetyl-CoA carboxylase (157 aa).

The region spanning 80 to 156 (YATIVSPMVG…DCGQALMKVE (77 aa)) is the Biotinyl-binding domain. Lys-122 bears the N6-biotinyllysine mark.

Its subcellular location is the plastid. The protein localises to the chloroplast. It participates in lipid metabolism; fatty acid biosynthesis. Its function is as follows. This protein is a component of the acetyl coenzyme A carboxylase complex; first, biotin carboxylase catalyzes the carboxylation of the carrier protein and then the transcarboxylase transfers the carboxyl group to form malonyl-CoA. This is Biotin carboxyl carrier protein of acetyl-CoA carboxylase (accB) from Porphyra purpurea (Red seaweed).